We begin with the raw amino-acid sequence, 257 residues long: Large ribosomal subunit protein uL2 (257 aa).

Residues 207–226 are disordered; sequence VEHPFGGGNHQHIGKPSTIR.

This sequence belongs to the universal ribosomal protein uL2 family. In terms of assembly, component of the large ribosomal subunit.

Its subcellular location is the cytoplasm. Functionally, component of the large ribosomal subunit. The ribosome is a large ribonucleoprotein complex responsible for the synthesis of proteins in the cell. This is Large ribosomal subunit protein uL2 (rpl8) from Ictalurus punctatus (Channel catfish).